The primary structure comprises 229 residues: Small ribosomal subunit protein uS5 (229 aa).

Residues 61–124 (LEEQVLDVKL…AHAKLSLIKV (64 aa)) form the S5 DRBM domain.

It belongs to the universal ribosomal protein uS5 family. In terms of assembly, part of the 30S ribosomal subunit. Contacts protein S4.

Functionally, with S4 and S12 plays an important role in translational accuracy. In Methanococcus maripaludis (strain C7 / ATCC BAA-1331), this protein is Small ribosomal subunit protein uS5.